The primary structure comprises 105 residues: Large ribosomal subunit protein uL24 (105 aa).

It belongs to the universal ribosomal protein uL24 family. As to quaternary structure, part of the 50S ribosomal subunit.

Functionally, one of two assembly initiator proteins, it binds directly to the 5'-end of the 23S rRNA, where it nucleates assembly of the 50S subunit. In terms of biological role, one of the proteins that surrounds the polypeptide exit tunnel on the outside of the subunit. This chain is Large ribosomal subunit protein uL24, found in Azoarcus sp. (strain BH72).